The chain runs to 768 residues: DNA ligase (768 aa).

NAD(+) contacts are provided by residues 61–65 (DAEFD), 110–111 (SL), and Glu146. Lys148 functions as the N6-AMP-lysine intermediate in the catalytic mechanism. Positions 169, 206, 322, and 346 each coordinate NAD(+). Zn(2+) is bound by residues Cys443, Cys446, Cys462, and Cys468. The region spanning 661-750 (SVPRTLEGLT…PAQTGTEAEA (90 aa)) is the BRCT domain. A disordered region spans residues 739–768 (NGPAQTGTEAEAATDEATVVDETAAEAATE). Over residues 746–768 (TEAEAATDEATVVDETAAEAATE) the composition is skewed to low complexity.

Belongs to the NAD-dependent DNA ligase family. LigA subfamily. The cofactor is Mg(2+). Requires Mn(2+) as cofactor.

It catalyses the reaction NAD(+) + (deoxyribonucleotide)n-3'-hydroxyl + 5'-phospho-(deoxyribonucleotide)m = (deoxyribonucleotide)n+m + AMP + beta-nicotinamide D-nucleotide.. Functionally, DNA ligase that catalyzes the formation of phosphodiester linkages between 5'-phosphoryl and 3'-hydroxyl groups in double-stranded DNA using NAD as a coenzyme and as the energy source for the reaction. It is essential for DNA replication and repair of damaged DNA. The protein is DNA ligase of Paenarthrobacter aurescens (strain TC1).